A 182-amino-acid chain; its full sequence is MNRLKKHYEEIIRLDMIRKFNYVNPHMVPKIDKIIVNMGVKEAASDKKQILAPLLILELITGQKAIVTKAKKSISNFKIRKGFPIGVSVTLRGNNMYEFLSKLITLVLPKIRDFKGVPFTSINKYGHLAIGIKDLLVFPEIESEYDKFNRVYGANIVIVTTAKTKKEAGVLLSGFQIPLNKR.

This sequence belongs to the universal ribosomal protein uL5 family.

It localises to the mitochondrion. This Reclinomonas americana protein is Large ribosomal subunit protein uL5m (RPL5).